Consider the following 379-residue polypeptide: Glutamate 5-kinase (379 aa).

Position 8 (Lys-8) interacts with ATP. The substrate site is built by Ser-49, Asp-136, and Asn-148. ATP-binding positions include 168-169 (TD) and 211-217 (TGGMATK). In terms of domain architecture, PUA spans 276 to 354 (MGKIYLDAGA…ERIASLLGYM (79 aa)).

It belongs to the glutamate 5-kinase family.

It is found in the cytoplasm. It carries out the reaction L-glutamate + ATP = L-glutamyl 5-phosphate + ADP. It participates in amino-acid biosynthesis; L-proline biosynthesis; L-glutamate 5-semialdehyde from L-glutamate: step 1/2. Catalyzes the transfer of a phosphate group to glutamate to form L-glutamate 5-phosphate. The sequence is that of Glutamate 5-kinase from Microcystis aeruginosa (strain NIES-843 / IAM M-2473).